The following is a 1085-amino-acid chain: MPHFTVVPVDGPRRGDYDNLEGLSWVDYGERAEREDSDGQGNHRENSPFLSPLDASRGNDYYDRNLALFEEELDIRPKVSSLLGKLVSYTNLTQGAKEHEEAESGEGGRRRAAKAPSMGTLMGVYLPCLQNIFGVILFLRLTWMVGTAGVLQALLIVLICCCCTLLTAISMSAIATNGVVPAGGSYFMISRSLGPEFGGAVGLCFYLGTTFAAAMYILGAIEILLTYIAPPAAIFYPSGTHDMSSATLNNMRVYGTIFLTFMTLVVFVGVKYVNKFASLFLACVIISILSIYVGGIKSAFDPPVFPVCMLGNRTLSRDQFDICAKTVVVDNETVATRLWTFFCHSPNLTADSCDPYFLLNNVTEIPGIPGAAAGVLQENLWSAYLEKGEVVEKHGLPSTDTLGLKESLSLYVVADIATSFTVLVGIFFPSVTGIMAGSNRSGDLRDAQKSIPVGTILAIVTTSLVYFSSVILFGACIEGVVLRDKYGDGVSRNLVVGTLAWPSPWVIVVGSFFSTCGAGLQSLTGAPRLLQAIAKDNIIPFLRVFGHGKANGEPTWALLLTALIAELGILIASLDMVAPILSMFFLMCYLFVNLACAVQTLLRTPNWRPRFKYYHWALSFLGMSLCLALMFVSSWYYALVAMVIAGMIYKYIEYQGAEKEWGDGIRGLSLSAARYALLRLEEGPPHTKNWRPQLLVLLKLDEDLHVKYPRLLTFASQLKAGKGLTIVGSVIQGSFLESYGEAQAAEQTIKNMMEIEKVKGFCQVVVASKVREGLAHLIQSCGLGGMRHNSVVLGWPYGWRQSEDPRAWKTFIDTVRCTTAAHLALLVPKNIAFYPSNHERYLEGHIDVWWIVHDGGMLMLLPFLLRQHKVWKKCRMRIFTVAQMDDNSIQMKKDLAIFLYHLRLEAEVEVVEMHNSDISAYTYERTLMMEQRSQMLRQMRLTKTERDREAQLVKDRHSALRLESLYSDEEDESVTGADKIQMTWTRDKYMAEPWDPSHAPDNFRELVHIKPDQSNVRRMHTAVKLNEVIVTRSHDARLVLLNMPGPPKNSEGDENYMEFLEVLTEGLERVLLVRGGGREVITIYS.

At 1 to 119 (MPHFTVVPVD…RRAAKAPSMG (119 aa)) the chain is on the cytoplasmic side. Phosphoserine is present on residues Ser24, Ser47, Ser51, Ser81, and Ser88. Residues 32–56 (AEREDSDGQGNHRENSPFLSPLDAS) are disordered. The discontinuously helical transmembrane segment at 120-141 (TLMGVYLPCLQNIFGVILFLRL) threads the bilayer. Asn131 and Ile132 together coordinate K(+). At 142–149 (TWMVGTAG) the chain is on the extracellular side. A helical membrane pass occupies residues 150-172 (VLQALLIVLICCCCTLLTAISMS). Residues 173 to 196 (AIATNGVVPAGGSYFMISRSLGPE) lie on the Cytoplasmic side of the membrane. Residues 197 to 225 (FGGAVGLCFYLGTTFAAAMYILGAIEILL) form a helical membrane-spanning segment. Tyr216 contacts K(+). Over 226–248 (TYIAPPAAIFYPSGTHDMSSATL) the chain is Extracellular. Helical transmembrane passes span 249–271 (NNMRVYGTIFLTFMTLVVFVGVK) and 272–297 (YVNKFASLFLACVIISILSIYVGGIK). Residues 298-419 (SAFDPPVFPV…LYVVADIATS (122 aa)) lie on the Extracellular side of the membrane. Cys308 and Cys323 form a disulfide bridge. Residues Asn312, Asn331, and Asn347 are each glycosylated (N-linked (GlcNAc...) asparagine). An intrachain disulfide couples Cys343 to Cys353. Residues 420–440 (FTVLVGIFFPSVTGIMAGSNR) form a helical membrane-spanning segment. K(+)-binding residues include Pro429 and Thr432. Chloride contacts are provided by Gly433, Ile434, and Met435. Over 441–450 (SGDLRDAQKS) the chain is Cytoplasmic. The helical transmembrane segment at 451–473 (IPVGTILAIVTTSLVYFSSVILF) threads the bilayer. At 474 to 504 (GACIEGVVLRDKYGDGVSRNLVVGTLAWPSP) the chain is on the extracellular side. The helical transmembrane segment at 505–531 (WVIVVGSFFSTCGAGLQSLTGAPRLLQ) threads the bilayer. The Cytoplasmic segment spans residues 532 to 554 (AIAKDNIIPFLRVFGHGKANGEP). 2 consecutive transmembrane segments (helical) span residues 555 to 575 (TWALLLTALIAELGILIASLD) and 576 to 598 (MVAPILSMFFLMCYLFVNLACAV). Chloride is bound at residue Tyr589. The Cytoplasmic segment spans residues 599 to 612 (QTLLRTPNWRPRFK). The next 2 helical transmembrane spans lie at 613–635 (YYHWALSFLGMSLCLALMFVSSW) and 636–651 (YYALVAMVIAGMIYKY). Residues 652–1085 (IEYQGAEKEW…GGREVITIYS (434 aa)) lie on the Cytoplasmic side of the membrane. The scissor helix stretch occupies residues 665–681 (IRGLSLSAARYALLRLE). Residues Leu697, Lys699, Lys707, Tyr708, and Val730 each contribute to the ATP site. Ser734 carries the post-translational modification Phosphoserine. 3 residues coordinate ATP: Gly794, Trp795, and Tyr797. Phosphoserine is present on residues Ser916 and Ser967. At Thr983 the chain carries Phosphothreonine. The residue at position 1050 (Ser1050) is a Phosphoserine.

This sequence belongs to the SLC12A transporter family. K/Cl co-transporter subfamily. Homodimer; adopts a domain-swap conformation at the scissor helices connecting the transmembrane domain and C-terminal domain. Heterodimer with other K-Cl cotransporters. In terms of processing, N-glycosylated. Post-translationally, phosphorylated, phosphorylation may regulate transporter activity. Ubiquitous.

The protein resides in the cell membrane. The catalysed reaction is K(+)(in) + chloride(in) = K(+)(out) + chloride(out). Inhibited by WNK3. Its function is as follows. Mediates electroneutral potassium-chloride cotransport when activated by cell swelling. May contribute to cell volume homeostasis in single cells. May be involved in the regulation of basolateral Cl(-) exit in NaCl absorbing epithelia. The protein is Solute carrier family 12 member 4 (Slc12a4) of Rattus norvegicus (Rat).